We begin with the raw amino-acid sequence, 950 residues long: Glycine dehydrogenase (decarboxylating) 1 (950 aa).

Lys-704 carries the N6-(pyridoxal phosphate)lysine modification.

It belongs to the GcvP family. In terms of assembly, the glycine cleavage system is composed of four proteins: P, T, L and H. Requires pyridoxal 5'-phosphate as cofactor.

The catalysed reaction is N(6)-[(R)-lipoyl]-L-lysyl-[glycine-cleavage complex H protein] + glycine + H(+) = N(6)-[(R)-S(8)-aminomethyldihydrolipoyl]-L-lysyl-[glycine-cleavage complex H protein] + CO2. In terms of biological role, the glycine cleavage system catalyzes the degradation of glycine. The P protein binds the alpha-amino group of glycine through its pyridoxal phosphate cofactor; CO(2) is released and the remaining methylamine moiety is then transferred to the lipoamide cofactor of the H protein. The protein is Glycine dehydrogenase (decarboxylating) 1 of Pseudomonas fluorescens (strain Pf0-1).